A 496-amino-acid chain; its full sequence is Cytochrome P450 71A15 (496 aa).

The chain crosses the membrane as a helical span at residues 3–23 (IIIISLCLATILAFLLLKPLL). Cys439 provides a ligand contact to heme.

It belongs to the cytochrome P450 family. The cofactor is heme.

The protein localises to the membrane. The chain is Cytochrome P450 71A15 (CYP71A15) from Arabidopsis thaliana (Mouse-ear cress).